A 354-amino-acid chain; its full sequence is Methylthioribose-1-phosphate isomerase (354 aa).

Residues 58–60, Arg-101, and Gln-204 each bind substrate; that span reads RGA. The Proton donor role is filled by Asp-245. 255-256 is a substrate binding site; that stretch reads NK.

It belongs to the eIF-2B alpha/beta/delta subunits family. MtnA subfamily.

It catalyses the reaction 5-(methylsulfanyl)-alpha-D-ribose 1-phosphate = 5-(methylsulfanyl)-D-ribulose 1-phosphate. It functions in the pathway amino-acid biosynthesis; L-methionine biosynthesis via salvage pathway; L-methionine from S-methyl-5-thio-alpha-D-ribose 1-phosphate: step 1/6. In terms of biological role, catalyzes the interconversion of methylthioribose-1-phosphate (MTR-1-P) into methylthioribulose-1-phosphate (MTRu-1-P). The chain is Methylthioribose-1-phosphate isomerase from Xylella fastidiosa (strain 9a5c).